The following is an 82-amino-acid chain: Acyl carrier protein (82 aa).

The region spanning Pro4–Gln79 is the Carrier domain. Ser39 is modified (O-(pantetheine 4'-phosphoryl)serine).

Belongs to the acyl carrier protein (ACP) family. In terms of processing, 4'-phosphopantetheine is transferred from CoA to a specific serine of apo-ACP by AcpS. This modification is essential for activity because fatty acids are bound in thioester linkage to the sulfhydryl of the prosthetic group.

It localises to the cytoplasm. It participates in lipid metabolism; fatty acid biosynthesis. Carrier of the growing fatty acid chain in fatty acid biosynthesis. The polypeptide is Acyl carrier protein (Chloroflexus aurantiacus (strain ATCC 29366 / DSM 635 / J-10-fl)).